Consider the following 232-residue polypeptide: Triosephosphate isomerase (232 aa).

6 to 8 (NFK) contributes to the substrate binding site. The active-site Electrophile is His90. Glu159 functions as the Proton acceptor in the catalytic mechanism. 2 residues coordinate substrate: Gly165 and Ser195.

This sequence belongs to the triosephosphate isomerase family. As to quaternary structure, homodimer.

It is found in the cytoplasm. It carries out the reaction D-glyceraldehyde 3-phosphate = dihydroxyacetone phosphate. It participates in carbohydrate biosynthesis; gluconeogenesis. It functions in the pathway carbohydrate degradation; glycolysis; D-glyceraldehyde 3-phosphate from glycerone phosphate: step 1/1. In terms of biological role, involved in the gluconeogenesis. Catalyzes stereospecifically the conversion of dihydroxyacetone phosphate (DHAP) to D-glyceraldehyde-3-phosphate (G3P). This Wolinella succinogenes (strain ATCC 29543 / DSM 1740 / CCUG 13145 / JCM 31913 / LMG 7466 / NCTC 11488 / FDC 602W) (Vibrio succinogenes) protein is Triosephosphate isomerase.